A 336-amino-acid polypeptide reads, in one-letter code: Torsin-1B (336 aa).

The N-terminal stretch at Met1–Ala24 is a signal peptide. Asn64 carries N-linked (GlcNAc...) asparagine glycosylation. Gly109–Asn116 is an ATP binding site. N-linked (GlcNAc...) asparagine glycosylation occurs at Asn165.

Belongs to the ClpA/ClpB family. Torsin subfamily. In terms of assembly, homohexamer. Interacts with TOR1A; the interaction may be specific of neural tissues. Interacts with TOR1AIP1; TOR1AIP1 is required for TOR1B location on the nuclear membrane. Interacts (ATP-bound) with TOR1AIP2; important for endoplasmic reticulum integrity. N-glycosylated. As to expression, widely expressed with low levels in brain.

The protein localises to the endoplasmic reticulum lumen. It is found in the nucleus membrane. It catalyses the reaction ATP + H2O = ADP + phosphate + H(+). Its function is as follows. May serve as a molecular chaperone assisting in the proper folding of secreted and/or membrane proteins. Plays a role in non-neural cells nuclear envelope and endoplasmic reticulum integrity. May have a redundant function with TOR1A in non-neural tissues. The sequence is that of Torsin-1B (TOR1B) from Homo sapiens (Human).